We begin with the raw amino-acid sequence, 132 residues long: Ribosome-binding factor A (132 aa).

Belongs to the RbfA family. In terms of assembly, monomer. Binds 30S ribosomal subunits, but not 50S ribosomal subunits or 70S ribosomes.

The protein localises to the cytoplasm. Its function is as follows. One of several proteins that assist in the late maturation steps of the functional core of the 30S ribosomal subunit. Associates with free 30S ribosomal subunits (but not with 30S subunits that are part of 70S ribosomes or polysomes). Required for efficient processing of 16S rRNA. May interact with the 5'-terminal helix region of 16S rRNA. The sequence is that of Ribosome-binding factor A from Burkholderia multivorans (strain ATCC 17616 / 249).